Reading from the N-terminus, the 385-residue chain is 2-oxoglutarate-dependent dioxygenase AFUA_1G01000 (385 aa).

The 125-residue stretch at 203–327 (PSDDFLRLLR…RYSVLVGTRP (125 aa)) folds into the Fe2OG dioxygenase domain. Fe cation is bound by residues H230, D232, and H304. Residue R318 participates in 2-oxoglutarate binding.

Belongs to the iron/ascorbate-dependent oxidoreductase family. Fe(2+) is required as a cofactor.

Functionally, 2-oxoglutarate-dependent dioxygenase; part of the gene cluster that mediates the biosynthesis of fumigermin that inhibits germination of spores of the inducing S.rapamycinicus, and thus helps the fungus to defend resources in the shared habitat against a bacterial competitor. The partially reducing polyketide synthase fngA alone is sufficient for the production of fumigermin. FgnA catalyzes the condensation of 3 malonyl-CoA units to an acetyl-CoA starter, and 3 methylations to yield fumigermin. It is remarkable that the five cluster genes including fgnA are conserved in distantly related fungi, supporting the assumption of a fumigermin cluster; it is thus possible that originally all five genes were functional, but that the genes encoding tailoring enzymes became inactive from mutations, similar to the case of the fgnA gene in strains A1163 and Af293. The sequence is that of 2-oxoglutarate-dependent dioxygenase AFUA_1G01000 from Aspergillus fumigatus (strain ATCC MYA-4609 / CBS 101355 / FGSC A1100 / Af293) (Neosartorya fumigata).